The following is a 193-amino-acid chain: Cyanate hydratase (193 aa).

Catalysis depends on residues Arg-121, Glu-124, and Ser-147.

Belongs to the cyanase family.

The enzyme catalyses cyanate + hydrogencarbonate + 3 H(+) = NH4(+) + 2 CO2. In terms of biological role, catalyzes the reaction of cyanate with bicarbonate to produce ammonia and carbon dioxide. The sequence is that of Cyanate hydratase from Phaeodactylum tricornutum (strain CCAP 1055/1).